Consider the following 585-residue polypeptide: Acetolactate synthase large subunit (585 aa).

Residue Glu-60 participates in thiamine diphosphate binding. FAD-binding positions include Arg-162, 272–293 (HGTAYANFAVSECDLLIALGAR), and 315–334 (DIDPAEIGKNRIPQLAIISD). Residues 407–486 (QHQMWAAQFL…IKIFIINNQW (80 aa)) form a thiamine pyrophosphate binding region. Asp-457 and Asn-484 together coordinate Mg(2+).

It belongs to the TPP enzyme family. In terms of assembly, dimer of large and small chains. It depends on Mg(2+) as a cofactor. Thiamine diphosphate serves as cofactor.

The protein resides in the plastid. It localises to the chloroplast. The catalysed reaction is 2 pyruvate + H(+) = (2S)-2-acetolactate + CO2. It functions in the pathway amino-acid biosynthesis; L-isoleucine biosynthesis; L-isoleucine from 2-oxobutanoate: step 1/4. Its pathway is amino-acid biosynthesis; L-valine biosynthesis; L-valine from pyruvate: step 1/4. In Cyanidium caldarium (Red alga), this protein is Acetolactate synthase large subunit (ilvB).